A 406-amino-acid polypeptide reads, in one-letter code: Putative ankyrin repeat protein RF_0266 (406 aa).

ANK repeat units follow at residues 68-98 (TSHS…DINN), 103-129 (NYIT…QDDI), 130-161 (KVQN…IIKP), 163-189 (HIEL…DIEK), and 203-232 (SIDC…KPEQ).

This is Putative ankyrin repeat protein RF_0266 from Rickettsia felis (strain ATCC VR-1525 / URRWXCal2) (Rickettsia azadi).